Here is a 273-residue protein sequence, read N- to C-terminus: N(omega)-hydroxy-L-arginine amidinohydrolase (273 aa).

Mn(2+) is bound by residues D109, H111, D113, D198, and D200.

Belongs to the arginase family. It depends on Mn(2+) as a cofactor.

It carries out the reaction N(omega)-hydroxy-L-arginine + H2O = hydroxyurea + L-ornithine. Functionally, involved in the biosynthesis of the antibiotic D-cycloserine (DCS), a cyclic structural analog of D-alanine, used as an antitubercular agent. Catalyzes the hydrolysis of N(omega)-hydroxy-L-arginine (NHA) to yield hydroxyurea (HU) and L-ornithine. The sequence is that of N(omega)-hydroxy-L-arginine amidinohydrolase from Streptomyces lavendulae.